Here is a 197-residue protein sequence, read N- to C-terminus: Probable molybdenum cofactor guanylyltransferase (197 aa).

GTP-binding positions include L9 to G11, K21, D65, and D94. Position 94 (D94) interacts with Mg(2+).

Belongs to the MobA family. The cofactor is Mg(2+).

It is found in the cytoplasm. It catalyses the reaction Mo-molybdopterin + GTP + H(+) = Mo-molybdopterin guanine dinucleotide + diphosphate. Its function is as follows. Transfers a GMP moiety from GTP to Mo-molybdopterin (Mo-MPT) cofactor (Moco or molybdenum cofactor) to form Mo-molybdopterin guanine dinucleotide (Mo-MGD) cofactor. This chain is Probable molybdenum cofactor guanylyltransferase, found in Carboxydothermus hydrogenoformans (strain ATCC BAA-161 / DSM 6008 / Z-2901).